We begin with the raw amino-acid sequence, 405 residues long: 4-hydroxy-3-methylbut-2-en-1-yl diphosphate synthase (flavodoxin) (405 aa).

The [4Fe-4S] cluster site is built by cysteine 297, cysteine 300, cysteine 343, and glutamate 350.

This sequence belongs to the IspG family. [4Fe-4S] cluster is required as a cofactor.

The enzyme catalyses (2E)-4-hydroxy-3-methylbut-2-enyl diphosphate + oxidized [flavodoxin] + H2O + 2 H(+) = 2-C-methyl-D-erythritol 2,4-cyclic diphosphate + reduced [flavodoxin]. It participates in isoprenoid biosynthesis; isopentenyl diphosphate biosynthesis via DXP pathway; isopentenyl diphosphate from 1-deoxy-D-xylulose 5-phosphate: step 5/6. In terms of biological role, converts 2C-methyl-D-erythritol 2,4-cyclodiphosphate (ME-2,4cPP) into 1-hydroxy-2-methyl-2-(E)-butenyl 4-diphosphate. In Francisella tularensis subsp. tularensis (strain FSC 198), this protein is 4-hydroxy-3-methylbut-2-en-1-yl diphosphate synthase (flavodoxin).